The following is a 214-amino-acid chain: Transmembrane emp24 domain-containing protein p24delta9 (214 aa).

A signal peptide spans 1–24 (MFLRSLNLCTILLFLAISSQVSQS). Residues 25-181 (LHFELQSGRT…QNLNRATNSK (157 aa)) are Lumenal-facing. The region spanning 34 to 149 (TKCISEDIKS…VEVMEFDVKR (116 aa)) is the GOLD domain. Positions 164 to 177 (LREREEEMQNLNRA) form a coiled coil. Residue Arg-167 is modified to Omega-N-methylated arginine. The helical transmembrane segment at 182–202 (MAWLSFLSLFVCLGVAGMQFV) threads the bilayer. The Cytoplasmic portion of the chain corresponds to 203–214 (HLKTFFEKKKVI). The COPII vesicle coat-binding signature appears at 207-208 (FF). A COPI vesicle coat-binding motif is present at residues 207–214 (FFEKKKVI).

It belongs to the EMP24/GP25L family. As to quaternary structure, probably oligomerizes with other members of the EMP24/GP25L family. Associates with the COPI vesicle coat (coatomer). Associates with the COPII vesicle coat (coatomer).

It is found in the endoplasmic reticulum membrane. The protein resides in the golgi apparatus. It localises to the cis-Golgi network membrane. Its subcellular location is the golgi stack membrane. Involved in vesicular protein trafficking. Mainly functions in the early secretory pathway. Thought to act as cargo receptor at the lumenal side for incorporation of secretory cargo molecules into transport vesicles and to be involved in vesicle coat formation at the cytoplasmic side. This Arabidopsis thaliana (Mouse-ear cress) protein is Transmembrane emp24 domain-containing protein p24delta9.